The primary structure comprises 48 residues: Small polypeptide DEVIL 19 (48 aa).

The tract at residues 13 to 44 (AFTSKCVSLVKEQRARLYILRRCATMLCCWYI) is required for DVL/RTFL small polypeptide activity. The chain crosses the membrane as a helical span at residues 25–42 (QRARLYILRRCATMLCCW).

This sequence belongs to the DVL/RTFL small polypeptides family.

The protein localises to the cell membrane. Its function is as follows. Small polypeptide acting as a regulatory molecule which coordinates cellular responses required for differentiation, growth and development, probably by restricting polar cell proliferation in lateral organs and coordinating socket cell recruitment and differentiation at trichome sites. This chain is Small polypeptide DEVIL 19, found in Arabidopsis thaliana (Mouse-ear cress).